The sequence spans 623 residues: NADPH-dependent diflavin oxidoreductase 1 (623 aa).

In terms of domain architecture, Flavodoxin-like spans 8 to 153; that stretch reads LLVLYASQTG…TLDPWMLSLW (146 aa). Residues 14–19, 62–65, and Asp135 contribute to the FMN site; these read SQTGNA and STTG. Residues 221 to 467 form the FAD-binding FR-type domain; it reads KPDCFLKMTR…SLPAPSQSLP (247 aa). FAD contacts are provided by residues Arg369, 399 to 402, and 433 to 436; these read RAFS and GLCS. NADP(+) contacts are provided by residues Thr475, 541-542, 547-551, and Asp583; these read SR and KVYVQ. Residue Trp622 participates in FAD binding.

It belongs to the NADPH-dependent diflavin oxidoreductase NDOR1 family. The protein in the N-terminal section; belongs to the flavodoxin family. This sequence in the C-terminal section; belongs to the flavoprotein pyridine nucleotide cytochrome reductase family. In terms of assembly, interacts with At5g18400. FAD is required as a cofactor. It depends on FMN as a cofactor. In terms of tissue distribution, widely expressed.

Its subcellular location is the cytoplasm. It localises to the nucleus. The enzyme catalyses 2 oxidized [2Fe-2S]-[protein] + NADPH = 2 reduced [2Fe-2S]-[protein] + NADP(+) + H(+). In terms of biological role, NADPH-dependent reductase which is a central component of the cytosolic iron-sulfur (Fe-S) protein assembly (CIA) machinery. Transfers electrons from NADPH via its FAD and FMN prosthetic groups to the [2Fe-2S] cluster of the anamorsin/DRE2 homolog, another key component of the CIA machinery. In turn, this reduced cluster provides electrons for assembly of cytosolic iron-sulfur cluster proteins. Catalyzes the NADP-dependent reduction of cytochrome c, but not cytochrome P450 in vitro. Required for embryo development. The sequence is that of NADPH-dependent diflavin oxidoreductase 1 (ATR3) from Arabidopsis thaliana (Mouse-ear cress).